Reading from the N-terminus, the 462-residue chain is MKPRILVLGDVMIDHYLFGKCDRISPEAPVQVVDVQKEELVLGGAGNVVNNLLAFGAEVGIISVVGEDANGIWLEQRFQEKGVQTYLLKENRPTTKKSRIIASNQQIVRVDREEKKEIESLTQQKILNVFDRVIKEYDLVLLSDYDKGVLTKEVTQTVIQRSSVPVFVDPKNDFEKYRGATLIKPNKKEASKAVGFLIKNEEDLKRAGWKLKKELDLQSLIVTLSEEGMAIFEEEMMRIPTVAKEVYDVTGAGDTVLAALGYAVAKGKNLKEAAVFANLAAGVVVGKVGAATATLEEIEEYERSIRKAPTEEFIKDFEEIELISKDLHKRGKRIVFTNGCFDILHLGHVKYLQKAKELGDVLIVGVNSDASVKRLKGDDRPINPQFDRAYLLASLEAVDYVVIFEEDTPYELIKIVKPDILVKGGDYKGKEVVGSDIAKEVRLIDFVEGKSTTAIVERMRSC.

A ribokinase region spans residues 1-309; sequence MKPRILVLGD…EYERSIRKAP (309 aa). 186 to 189 contributes to the ATP binding site; sequence NKKE. The active site involves aspartate 254. A cytidylyltransferase region spans residues 336 to 462; it reads FTNGCFDILH…TAIVERMRSC (127 aa).

It in the N-terminal section; belongs to the carbohydrate kinase PfkB family. This sequence in the C-terminal section; belongs to the cytidylyltransferase family. As to quaternary structure, homodimer.

The enzyme catalyses D-glycero-beta-D-manno-heptose 7-phosphate + ATP = D-glycero-beta-D-manno-heptose 1,7-bisphosphate + ADP + H(+). It carries out the reaction D-glycero-beta-D-manno-heptose 1-phosphate + ATP + H(+) = ADP-D-glycero-beta-D-manno-heptose + diphosphate. The protein operates within nucleotide-sugar biosynthesis; ADP-L-glycero-beta-D-manno-heptose biosynthesis; ADP-L-glycero-beta-D-manno-heptose from D-glycero-beta-D-manno-heptose 7-phosphate: step 1/4. It participates in nucleotide-sugar biosynthesis; ADP-L-glycero-beta-D-manno-heptose biosynthesis; ADP-L-glycero-beta-D-manno-heptose from D-glycero-beta-D-manno-heptose 7-phosphate: step 3/4. In terms of biological role, catalyzes the phosphorylation of D-glycero-D-manno-heptose 7-phosphate at the C-1 position to selectively form D-glycero-beta-D-manno-heptose-1,7-bisphosphate. Functionally, catalyzes the ADP transfer from ATP to D-glycero-beta-D-manno-heptose 1-phosphate, yielding ADP-D-glycero-beta-D-manno-heptose. The protein is Bifunctional protein HldE of Nitratiruptor sp. (strain SB155-2).